We begin with the raw amino-acid sequence, 126 residues long: Probable 4-amino-4-deoxy-L-arabinose-phosphoundecaprenol flippase subunit ArnF (126 aa).

The helical transmembrane segment at 1 to 21 threads the bilayer; it reads MGFFWALLSVGLVSAAQLLLR. At 22–47 the chain is on the periplasmic side; sequence SAMVALPPLTDIVAFLQHLLHFQPGT. A helical membrane pass occupies residues 48-68; that stretch reads FGLFFGLLGYLLSMVCWYFAL. Residues 69–76 are Cytoplasmic-facing; that stretch reads HRLPLSKA. Residues 77 to 97 form a helical membrane-spanning segment; the sequence is YALLSLSYILVWAAAIWLPGW. Residues 98–100 lie on the Periplasmic side of the membrane; sequence HEP. The helical transmembrane segment at 101–121 threads the bilayer; it reads FYWQSLLGVAIIVAGVLTIFW. Residues 122 to 126 lie on the Cytoplasmic side of the membrane; sequence PVKRR.

This sequence belongs to the ArnF family. Heterodimer of ArnE and ArnF.

The protein localises to the cell inner membrane. It functions in the pathway bacterial outer membrane biogenesis; lipopolysaccharide biosynthesis. Its function is as follows. Translocates 4-amino-4-deoxy-L-arabinose-phosphoundecaprenol (alpha-L-Ara4N-phosphoundecaprenol) from the cytoplasmic to the periplasmic side of the inner membrane. The protein is Probable 4-amino-4-deoxy-L-arabinose-phosphoundecaprenol flippase subunit ArnF of Klebsiella pneumoniae subsp. pneumoniae (strain ATCC 700721 / MGH 78578).